We begin with the raw amino-acid sequence, 218 residues long: UPF0711 protein C18orf21 homolog (218 aa).

Residue Ser-126 is modified to Phosphoserine. Over residues 130-146 the composition is skewed to low complexity; sequence ASAASKASPKTPKRAAA. Residues 130–192 are disordered; sequence ASAASKASPK…NGSKRKKHFS (63 aa). Residue Thr-140 is modified to Phosphothreonine. A compositionally biased stretch (polar residues) spans 147–156; it reads GSTNISQSVH. The span at 161 to 172 shows a compositional bias: low complexity; it reads RSPSSTVRTPTS. A compositionally biased stretch (polar residues) spans 173-183; sequence GQSTPICSSRN.

This sequence belongs to the UPF0711 family.

In Rattus norvegicus (Rat), this protein is UPF0711 protein C18orf21 homolog.